We begin with the raw amino-acid sequence, 993 residues long: Serine/threonine-protein phosphatase 6 regulatory ankyrin repeat subunit B (993 aa).

28 ANK repeats span residues 7–36 (CEQPPLVQAIFSGDPEEIRMLIHKTEDVNA), 40–69 (EKRTPLHVAAFLGDAEIIELLILSGARVNA), 73–102 (MWLTPLHRAVASRSEEAVQVLIKHSADVNA), 106–135 (NWQTPLHVAAANKAVKCAEVIIPLLSSVNV), 139–168 (GGRTALHHAALNGHMEMVNLLLAKGANINA), 172–201 (KDRRALHWAAYMGHLDVVALLINHGAEVTC), 205–234 (KGYTPLHAAASNGQISVVKHLLNLGVEIDE), 238–267 (YGNTALHIACYNGQDAVVNELIDYGANVNQ), 271–301 (SGFTPLHFAAASTHGALCLELLVNNGADVNI), 305–334 (DGKSPLHMTAVHGRFTRSQTLIQNGGEIDC), 338–367 (DGNTPLHVAARHGHELLINTLITSGADTAK), 371–400 (HSMFPLHLAALNAHSDCCRKLLSSGFEIDT), 404–433 (FGRTCLHAAAAGGNVECIKLLQSSGADFHK), 437–466 (CGRTPLHYAAANCHFHCIKALVTTGANVNE), 470–498 (WGRTALHYAAASDMDRNKMILGNAHDNSE), 531–561 (EGYNSIHYAAAYGHRQCLELLLERTNTGFEE), 566–595 (ALKSPLHLAAYNGHHQALEVLLQSLVDLDI), 599–628 (KGRTALYLAAFKGHTECVEALVNQGASIFV), 633–662 (TKRTPLHASVINGHTLCLRLLLETADNPEV), 669–698 (KGQTPLMLAVAYGHIDAVSLLLEKEANVDA), 702–731 (VGCTALHRGIMTGHEECVQMLLEQEASILC), 735–764 (RGRTPLHYAAARGHATWLNELLQIALSEED), 771–800 (QGYTPLHWACYNGNENCIEVLLEQKCFRKF), 803–832 (NPFTPLHCAIINGHESCASLLLGAIDPSIV), 838–867 (KGRTTLHAAAFGDHAECLQLLLRHDAQVNA), 871–901 (SGKTALMMAAENGQAGAVDILVNSAQADLTV), 905–934 (DLNTPLHLAISKGHEKCALLILDKIQDESL), and 941–970 (ALQTPLHIAARNGLKVVVEELLAKGACVLA). A disordered region spans residues 974–993 (NASRSNGPRSPPGTAVRKEE).

As to quaternary structure, protein phosphatase 6 (PP6) holoenzyme is proposed to be a heterotrimeric complex formed by the catalytic subunit, a SAPS domain-containing subunit (PP6R) and an ankyrin repeat-domain containing regulatory subunit (ARS). Interacts with PPP6R1.

Putative regulatory subunit of protein phosphatase 6 (PP6) that may be involved in the recognition of phosphoprotein substrates. The chain is Serine/threonine-protein phosphatase 6 regulatory ankyrin repeat subunit B (Ankrd44) from Mus musculus (Mouse).